Consider the following 21-residue polypeptide: M-lycotoxin-Ls4a (21 aa).

Leu21 is subject to Leucine amide.

In terms of tissue distribution, expressed by the venom gland.

The protein localises to the secreted. Its function is as follows. May inhibit growth of bacteria. This chain is M-lycotoxin-Ls4a, found in Lycosa singoriensis (Wolf spider).